Reading from the N-terminus, the 246-residue chain is Probable septum site-determining protein MinC (246 aa).

It belongs to the MinC family. In terms of assembly, interacts with MinD and FtsZ.

Its function is as follows. Cell division inhibitor that blocks the formation of polar Z ring septums. Rapidly oscillates between the poles of the cell to destabilize FtsZ filaments that have formed before they mature into polar Z rings. Prevents FtsZ polymerization. The protein is Probable septum site-determining protein MinC of Pseudomonas syringae pv. tomato (strain ATCC BAA-871 / DC3000).